A 196-amino-acid chain; its full sequence is Peroxynitrite isomerase (196 aa).

The GXWXGXG signature appears at 46–52 (GVWRGRG). Position 186 (His186) interacts with heme b.

Belongs to the nitrobindin family. Homodimer. Heme b is required as a cofactor.

The enzyme catalyses peroxynitrite = nitrate. It functions in the pathway nitrogen metabolism. Heme-binding protein able to scavenge peroxynitrite and to protect free L-tyrosine against peroxynitrite-mediated nitration, by acting as a peroxynitrite isomerase that converts peroxynitrite to nitrate. Therefore, this protein likely plays a role in peroxynitrite sensing and in the detoxification of reactive nitrogen and oxygen species (RNS and ROS, respectively). Is able to bind nitric oxide (NO) in vitro, but may act as a sensor of peroxynitrite levels in vivo. This Salinispora tropica (strain ATCC BAA-916 / DSM 44818 / JCM 13857 / NBRC 105044 / CNB-440) protein is Peroxynitrite isomerase.